A 354-amino-acid chain; its full sequence is Dihydroorotate dehydrogenase (quinone) (354 aa).

Residues 61–65 (AGYDK) and Ala85 contribute to the FMN site. Position 65 (Lys65) interacts with substrate. Substrate is bound at residue 110–114 (NRFGF). The FMN site is built by Asn139 and Asn170. Asn170 serves as a coordination point for substrate. Residue Ser173 is the Nucleophile of the active site. Residue Asn175 coordinates substrate. Residues Lys211 and Thr239 each contribute to the FMN site. Residue 240 to 241 (NT) coordinates substrate. FMN is bound by residues Gly261, Gly290, and 311–312 (YT).

The protein belongs to the dihydroorotate dehydrogenase family. Type 2 subfamily. Monomer. FMN serves as cofactor.

It is found in the cell membrane. It catalyses the reaction (S)-dihydroorotate + a quinone = orotate + a quinol. Its pathway is pyrimidine metabolism; UMP biosynthesis via de novo pathway; orotate from (S)-dihydroorotate (quinone route): step 1/1. Functionally, catalyzes the conversion of dihydroorotate to orotate with quinone as electron acceptor. This Cereibacter sphaeroides (strain ATCC 17023 / DSM 158 / JCM 6121 / CCUG 31486 / LMG 2827 / NBRC 12203 / NCIMB 8253 / ATH 2.4.1.) (Rhodobacter sphaeroides) protein is Dihydroorotate dehydrogenase (quinone).